A 470-amino-acid chain; its full sequence is Argininosuccinate lyase (470 aa).

The protein belongs to the lyase 1 family. Argininosuccinate lyase subfamily.

Its subcellular location is the cytoplasm. The catalysed reaction is 2-(N(omega)-L-arginino)succinate = fumarate + L-arginine. It functions in the pathway amino-acid biosynthesis; L-arginine biosynthesis; L-arginine from L-ornithine and carbamoyl phosphate: step 3/3. The protein is Argininosuccinate lyase of Mycobacterium sp. (strain JLS).